The sequence spans 193 residues: Ribosomal RNA small subunit methyltransferase G (193 aa).

Residues Gly64, Leu69, 113-114, and Arg126 each bind S-adenosyl-L-methionine; that span reads IE.

This sequence belongs to the methyltransferase superfamily. RNA methyltransferase RsmG family.

The protein resides in the cytoplasm. The catalysed reaction is guanosine(527) in 16S rRNA + S-adenosyl-L-methionine = N(7)-methylguanosine(527) in 16S rRNA + S-adenosyl-L-homocysteine. Its function is as follows. Specifically methylates the N7 position of guanine in position 527 of 16S rRNA. The chain is Ribosomal RNA small subunit methyltransferase G from Rickettsia massiliae (strain Mtu5).